We begin with the raw amino-acid sequence, 233 residues long: Phosphoenolpyruvate guanylyltransferase 1 (233 aa).

3 residues coordinate phosphoenolpyruvate: threonine 154, glycine 171, and serine 174.

The protein belongs to the CofC family.

The catalysed reaction is phosphoenolpyruvate + GTP + H(+) = enolpyruvoyl-2-diphospho-5'-guanosine + diphosphate. Its pathway is cofactor biosynthesis; coenzyme F420 biosynthesis. Guanylyltransferase that catalyzes the activation of phosphoenolpyruvate (PEP) as enolpyruvoyl-2-diphospho-5'-guanosine, via the condensation of PEP with GTP. It is involved in the biosynthesis of coenzyme F420, a hydride carrier cofactor. The protein is Phosphoenolpyruvate guanylyltransferase 1 of Rhodococcus jostii (strain RHA1).